Here is a 695-residue protein sequence, read N- to C-terminus: Elongation factor G 1 (695 aa).

The tr-type G domain maps to 6–282; sequence STFRNIGISA…AITYYLPDPT (277 aa). Residues 15–22, 82–86, and 136–139 each bind GTP; these read AHIDSGKT, DTPGH, and NKCD.

The protein belongs to the TRAFAC class translation factor GTPase superfamily. Classic translation factor GTPase family. EF-G/EF-2 subfamily.

It is found in the cytoplasm. Functionally, catalyzes the GTP-dependent ribosomal translocation step during translation elongation. During this step, the ribosome changes from the pre-translocational (PRE) to the post-translocational (POST) state as the newly formed A-site-bound peptidyl-tRNA and P-site-bound deacylated tRNA move to the P and E sites, respectively. Catalyzes the coordinated movement of the two tRNA molecules, the mRNA and conformational changes in the ribosome. This Treponema pallidum (strain Nichols) protein is Elongation factor G 1 (fusA).